The chain runs to 314 residues: Carbamate kinase (314 aa).

Belongs to the carbamate kinase family. In terms of assembly, homodimer.

It localises to the cytoplasm. It catalyses the reaction hydrogencarbonate + NH4(+) + ATP = carbamoyl phosphate + ADP + H2O + H(+). Carbamate kinase that plays a biosynthetic role in that it produces carbamoyl-phosphate. This Pyrococcus furiosus (strain ATCC 43587 / DSM 3638 / JCM 8422 / Vc1) protein is Carbamate kinase (cpkA).